We begin with the raw amino-acid sequence, 309 residues long: Large ribosomal subunit protein mL45 (309 aa).

Belongs to the mitochondrion-specific ribosomal protein mL45 family. As to quaternary structure, component of the mitochondrial ribosome large subunit (39S) which comprises a 16S rRNA and about 50 distinct proteins.

It localises to the mitochondrion. Its function is as follows. Component of the mitochondrial large ribosomal subunit (mt-LSU). Within the mitochondrial ribosomes, required to direct the nascent polypeptide toward the tunnel exit and position the exit at a distance from the membrane surface. The protein is Large ribosomal subunit protein mL45 (mrpl45) of Xenopus laevis (African clawed frog).